The chain runs to 81 residues: Large ribosomal subunit protein bL31B (81 aa).

It belongs to the bacterial ribosomal protein bL31 family. Type B subfamily. As to quaternary structure, part of the 50S ribosomal subunit.

This chain is Large ribosomal subunit protein bL31B, found in Bacillus anthracis (strain A0248).